The primary structure comprises 388 residues: Chorismate synthase (388 aa).

NADP(+) is bound by residues Arg-39 and Arg-45. FMN contacts are provided by residues 130 to 132 (RSS), 251 to 252 (NA), Gly-296, 311 to 315 (KPIPT), and Arg-337.

Belongs to the chorismate synthase family. As to quaternary structure, homotetramer. Requires FMNH2 as cofactor.

The catalysed reaction is 5-O-(1-carboxyvinyl)-3-phosphoshikimate = chorismate + phosphate. Its pathway is metabolic intermediate biosynthesis; chorismate biosynthesis; chorismate from D-erythrose 4-phosphate and phosphoenolpyruvate: step 7/7. Catalyzes the anti-1,4-elimination of the C-3 phosphate and the C-6 proR hydrogen from 5-enolpyruvylshikimate-3-phosphate (EPSP) to yield chorismate, which is the branch point compound that serves as the starting substrate for the three terminal pathways of aromatic amino acid biosynthesis. This reaction introduces a second double bond into the aromatic ring system. This is Chorismate synthase from Geobacillus kaustophilus (strain HTA426).